A 453-amino-acid chain; its full sequence is UDP-glycosyltransferase 74E1 (453 aa).

UDP-alpha-D-glucose is bound by residues serine 279, 332-334, 349-357, and 371-374; these read SPQ, HCGWNSTLE, and WADQ.

This sequence belongs to the UDP-glycosyltransferase family.

The protein is UDP-glycosyltransferase 74E1 (UGT74E1) of Arabidopsis thaliana (Mouse-ear cress).